Consider the following 421-residue polypeptide: MGEQLDPFSASNLPDFISSQKIGRPVNFEGQTNRGHPFSGLKKRGQSSRSWVKIDQDGNSAVLELDKATIMKRCSLPSRDLRLLDPLFIYPSSILGRERAIVVSLEKIRCIITAEEVILMNARDASVVQYQSELCKRLQSNHNLNVKDDLPFEFKALELVLELSCLSLDAQVNELEMEVYPVLDELATNISTLNLEHVRRLKGRLLTLTQKVQKVCDEIEHLMDDDDDMAEMYLTEKKERAEAHASEELEDNIGEDFESSGIVSKSAPVSPVGSTSGNFGKLQRAFSSIVGSHKSLLSSSSIGENIDQLEMLLEAYFVVVDNTLSKLSSLKEYIDDTEDLINIKLGNVQNQLIQFQLLLTAATFVAAIFAAVTAVFGMNLQDSVFQNPTTFQYVLLITGIGCGFLYFGFVLYFKHKKVFPL.

2 helical membrane passes run 357-377 (LLLT…AVFG) and 393-413 (YVLL…VLYF). The short motif at 377–379 (GMN) is the Required for magnesium transport activity element.

Belongs to the CorA metal ion transporter (MIT) (TC 1.A.35.5) family. In terms of tissue distribution, expressed in the whole plant.

It localises to the membrane. Functionally, magnesium transporter that may mediate the influx of magnesium. This chain is Magnesium transporter MRS2-5 (MRS2-5), found in Arabidopsis thaliana (Mouse-ear cress).